A 283-amino-acid polypeptide reads, in one-letter code: ATP synthase gamma chain (283 aa).

The protein belongs to the ATPase gamma chain family. In terms of assembly, F-type ATPases have 2 components, CF(1) - the catalytic core - and CF(0) - the membrane proton channel. CF(1) has five subunits: alpha(3), beta(3), gamma(1), delta(1), epsilon(1). CF(0) has three main subunits: a, b and c.

It localises to the cell membrane. Its function is as follows. Produces ATP from ADP in the presence of a proton gradient across the membrane. The gamma chain is believed to be important in regulating ATPase activity and the flow of protons through the CF(0) complex. The sequence is that of ATP synthase gamma chain from Desulforamulus reducens (strain ATCC BAA-1160 / DSM 100696 / MI-1) (Desulfotomaculum reducens).